The primary structure comprises 139 residues: Natriuretic peptides A (139 aa).

A signal peptide spans 1–21 (MTALVLWGLLLLLGQHTQVNS). The propeptide occupies 22 to 114 (HVLGRPFSAS…QDLLMSLRKR (93 aa)). Cysteines 118 and 134 form a disulfide.

This sequence belongs to the natriuretic peptide family.

It is found in the secreted. In terms of biological role, hormone playing a key role in cardiovascular homeostasis through regulation of natriuresis, diuresis, and vasodilation. Has a cGMP-stimulating activity. The polypeptide is Natriuretic peptides A (nppa) (Takifugu rubripes (Japanese pufferfish)).